The chain runs to 418 residues: Serine hydroxymethyltransferase (418 aa).

(6S)-5,6,7,8-tetrahydrofolate is bound by residues Leu121 and 125-127 (GHL). Residue Lys230 is modified to N6-(pyridoxal phosphate)lysine. 355–357 (SPF) is a (6S)-5,6,7,8-tetrahydrofolate binding site.

Belongs to the SHMT family. In terms of assembly, homodimer. Pyridoxal 5'-phosphate serves as cofactor.

Its subcellular location is the cytoplasm. The catalysed reaction is (6R)-5,10-methylene-5,6,7,8-tetrahydrofolate + glycine + H2O = (6S)-5,6,7,8-tetrahydrofolate + L-serine. The protein operates within one-carbon metabolism; tetrahydrofolate interconversion. It participates in amino-acid biosynthesis; glycine biosynthesis; glycine from L-serine: step 1/1. Functionally, catalyzes the reversible interconversion of serine and glycine with tetrahydrofolate (THF) serving as the one-carbon carrier. This reaction serves as the major source of one-carbon groups required for the biosynthesis of purines, thymidylate, methionine, and other important biomolecules. Also exhibits THF-independent aldolase activity toward beta-hydroxyamino acids, producing glycine and aldehydes, via a retro-aldol mechanism. In Streptococcus pyogenes serotype M1, this protein is Serine hydroxymethyltransferase.